The primary structure comprises 392 residues: Multidrug resistance protein MdtL (392 aa).

Helical transmembrane passes span 4–24, 38–58, 69–89, 95–115, 131–151, 158–178, 209–229, 246–266, 270–290, 294–314, 331–351, and 357–377; these read FLLC…MYLV, AQLH…MLFA, PVAI…AQVH, LIGR…AFAI, LLNG…HLIM, SLFY…VFIL, LLIT…SPVL, ALMA…LSLF, TLML…SLAT, VTLI…GVAM, VLGI…AIIG, and MLIG…LVVT.

This sequence belongs to the major facilitator superfamily. DHA1 family. MdtL (TC 2.A.1.2.22) subfamily.

Its subcellular location is the cell inner membrane. The protein is Multidrug resistance protein MdtL of Klebsiella pneumoniae subsp. pneumoniae (strain ATCC 700721 / MGH 78578).